The chain runs to 343 residues: Thromboxane A2 receptor (343 aa).

Residues Met1–Trp29 lie on the Extracellular side of the membrane. 2 N-linked (GlcNAc...) asparagine glycosylation sites follow: Asn4 and Asn16. Residues Phe30 to Ala52 traverse the membrane as a helical segment. At Arg53–Phe66 the chain is on the cytoplasmic side. A helical membrane pass occupies residues Leu67–Thr87. Residues Gln88–His106 are Extracellular-facing. A disulfide bridge connects residues Cys105 and Cys183. The helical transmembrane segment at Phe107–Ser128 threads the bilayer. Topologically, residues Glu129–Ala149 are cytoplasmic. The helical transmembrane segment at Trp150–Gly172 threads the bilayer. Topologically, residues His173–Asp193 are extracellular. The helical transmembrane segment at Val194–Val219 threads the bilayer. At Ala220–Gln246 the chain is on the cytoplasmic side. The helical transmembrane segment at Leu247–Leu270 threads the bilayer. At Gln271–Gln289 the chain is on the extracellular side. The chain crosses the membrane as a helical span at residues Leu290–Phe311. At Arg312–His343 the chain is on the cytoplasmic side. Residues Ser329 and Ser331 each carry the phosphoserine modification.

This sequence belongs to the G-protein coupled receptor 1 family. Interacts with RPGRIP1L. Interacts with RACK1; the interaction regulates TBXA2R cell surface expression.

The protein resides in the cell membrane. Its function is as follows. Receptor for thromboxane A2 (TXA2), a potent stimulator of platelet aggregation. The activity of this receptor is mediated by a G-protein that activates a phosphatidylinositol-calcium second messenger system. In the kidney, the binding of TXA2 to glomerular TP receptors causes intense vasoconstriction. Activates phospholipase C and adenylyl cyclase. This Bos taurus (Bovine) protein is Thromboxane A2 receptor (TBXA2R).